The following is a 126-amino-acid chain: Histone H2B type 2-B (126 aa).

A compositionally biased stretch (low complexity) spans 1-12 (MPDPAKSAPAPK). Residues 1-36 (MPDPAKSAPAPKKGSKKAVTKVQKKDGKKRKRSRKE) form a disordered region. Pro2 is modified (N-acetylproline). Lys6 is modified (N6-(2-hydroxyisobutyryl)lysine; alternate). The residue at position 6 (Lys6) is an N6-(beta-hydroxybutyryl)lysine; alternate. N6-acetyllysine; alternate is present on Lys6. Lys6 carries the N6-butyryllysine; alternate modification. Position 6 is an N6-crotonyllysine; alternate (Lys6). Lys6 carries the N6-lactoyllysine; alternate modification. Lys6 participates in a covalent cross-link: Glycyl lysine isopeptide (Lys-Gly) (interchain with G-Cter in SUMO2); alternate. Ser7 bears the ADP-ribosylserine mark. An N6-(beta-hydroxybutyryl)lysine; alternate modification is found at Lys12. An N6-acetyllysine; alternate mark is found at Lys12 and Lys13. 2 positions are modified to N6-crotonyllysine; alternate: Lys12 and Lys13. Lys12 carries the post-translational modification N6-lactoyllysine; alternate. The residue at position 13 (Lys13) is an N6-(2-hydroxyisobutyryl)lysine; alternate. Position 15 is a phosphoserine; by STK4/MST1 (Ser15). An N6-acetyllysine; alternate mark is found at Lys16, Lys17, Lys21, and Lys24. N6-crotonyllysine; alternate occurs at positions 16, 17, 21, and 24. Lys16, Lys17, Lys21, and Lys24 each carry N6-lactoyllysine; alternate. Lys17 carries the N6-glutaryllysine; alternate modification. Lys21 and Lys24 each carry N6-(2-hydroxyisobutyryl)lysine; alternate. The residue at position 21 (Lys21) is an N6-(beta-hydroxybutyryl)lysine; alternate. Position 21 is an N6-butyryllysine; alternate (Lys21). Lys21 participates in a covalent cross-link: Glycyl lysine isopeptide (Lys-Gly) (interchain with G-Cter in SUMO2); alternate. Lys25 carries the post-translational modification N6-(2-hydroxyisobutyryl)lysine. Lys35 is subject to N6-(2-hydroxyisobutyryl)lysine; alternate. N6-(beta-hydroxybutyryl)lysine; alternate is present on Lys35. Residue Lys35 is modified to N6-crotonyllysine; alternate. Lys35 is subject to N6-glutaryllysine; alternate. Lys35 carries the post-translational modification N6-succinyllysine; alternate. A Glycyl lysine isopeptide (Lys-Gly) (interchain with G-Cter in ubiquitin); alternate cross-link involves residue Lys35. Glu36 bears the PolyADP-ribosyl glutamic acid mark. Ser37 is modified (phosphoserine; by AMPK). Residues Lys44, Lys47, and Lys58 each carry the N6-(2-hydroxyisobutyryl)lysine; alternate modification. Residue Lys44 is modified to N6-lactoyllysine; alternate. N6-glutaryllysine; alternate is present on residues Lys44 and Lys47. Lys47 carries the post-translational modification N6-methyllysine; alternate. At Lys58 the chain carries N6,N6-dimethyllysine; alternate. The residue at position 80 (Arg80) is a Dimethylated arginine. Lys86 is subject to N6-(2-hydroxyisobutyryl)lysine; alternate. Lys86 is modified (N6-acetyllysine; alternate). Lys86 is subject to N6-lactoyllysine; alternate. Lys86 bears the N6,N6,N6-trimethyllysine; alternate mark. Omega-N-methylarginine occurs at positions 87 and 93. Lys109 bears the N6-(2-hydroxyisobutyryl)lysine; alternate mark. Lys109 is modified (N6-(beta-hydroxybutyryl)lysine; alternate). Lys109 carries the N6-lactoyllysine; alternate modification. N6-glutaryllysine; alternate is present on Lys109. The residue at position 109 (Lys109) is an N6-methyllysine; alternate. Ser113 is a glycosylation site (O-linked (GlcNAc) serine). A Phosphothreonine modification is found at Thr116. An N6-(2-hydroxyisobutyryl)lysine; alternate mark is found at Lys117 and Lys121. Lys117 carries the N6-(beta-hydroxybutyryl)lysine; alternate modification. An N6-lactoyllysine; alternate mark is found at Lys117 and Lys121. N6-glutaryllysine; alternate occurs at positions 117 and 121. An N6-succinyllysine; alternate mark is found at Lys117 and Lys121. The residue at position 117 (Lys117) is an N6-methylated lysine; alternate. Residue Lys121 forms a Glycyl lysine isopeptide (Lys-Gly) (interchain with G-Cter in ubiquitin); alternate linkage.

Belongs to the histone H2B family. In terms of assembly, the nucleosome is a histone octamer containing two molecules each of H2A, H2B, H3 and H4 assembled in one H3-H4 heterotetramer and two H2A-H2B heterodimers. The octamer wraps approximately 147 bp of DNA. In terms of processing, monoubiquitination at Lys-35 (H2BK34Ub) by the MSL1/MSL2 dimer is required for histone H3 'Lys-4' (H3K4me) and 'Lys-79' (H3K79me) methylation and transcription activation at specific gene loci, such as HOXA9 and MEIS1 loci. Similarly, monoubiquitination at Lys-121 (H2BK120Ub) by the RNF20/40 complex gives a specific tag for epigenetic transcriptional activation and is also prerequisite for histone H3 'Lys-4' and 'Lys-79' methylation. It also functions cooperatively with the FACT dimer to stimulate elongation by RNA polymerase II. H2BK120Ub also acts as a regulator of mRNA splicing: deubiquitination by USP49 is required for efficient cotranscriptional splicing of a large set of exons. Post-translationally, phosphorylated on Ser-15 (H2BS14ph) by STK4/MST1 during apoptosis; which facilitates apoptotic chromatin condensation. Also phosphorylated on Ser-15 in response to DNA double strand breaks (DSBs), and in correlation with somatic hypermutation and immunoglobulin class-switch recombination. Phosphorylation at Ser-37 (H2BS36ph) by AMPK in response to stress promotes transcription. GlcNAcylation at Ser-113 promotes monoubiquitination of Lys-121. It fluctuates in response to extracellular glucose, and associates with transcribed genes. In terms of processing, ADP-ribosylated by PARP1 or PARP2 on Ser-7 (H2BS6ADPr) in response to DNA damage. H2BS6ADPr promotes recruitment of CHD1L. Poly ADP-ribosylation on Glu-36 (H2BE35ADPr) by PARP1 regulates adipogenesis: it inhibits phosphorylation at Ser-37 (H2BS36ph), thereby blocking expression of pro-adipogenetic genes. Post-translationally, crotonylation (Kcr) is specifically present in male germ cells and marks testis-specific genes in post-meiotic cells, including X-linked genes that escape sex chromosome inactivation in haploid cells. Crotonylation marks active promoters and enhancers and confers resistance to transcriptional repressors. It is also associated with post-meiotically activated genes on autosomes. Hydroxybutyrylation of histones is induced by starvation. In terms of processing, lactylated in macrophages by EP300/P300 by using lactoyl-CoA directly derived from endogenous or exogenous lactate, leading to stimulates gene transcription.

The protein localises to the nucleus. The protein resides in the chromosome. Its function is as follows. Core component of nucleosome. Nucleosomes wrap and compact DNA into chromatin, limiting DNA accessibility to the cellular machineries which require DNA as a template. Histones thereby play a central role in transcription regulation, DNA repair, DNA replication and chromosomal stability. DNA accessibility is regulated via a complex set of post-translational modifications of histones, also called histone code, and nucleosome remodeling. The sequence is that of Histone H2B type 2-B from Mus musculus (Mouse).